The following is a 544-amino-acid chain: GMP synthase [glutamine-hydrolyzing] (544 aa).

Residues 12 to 210 (TILILDFGSQ…VKNVCGVRDG (199 aa)) enclose the Glutamine amidotransferase type-1 domain. Cys-88 functions as the Nucleophile in the catalytic mechanism. Catalysis depends on residues His-184 and Glu-186. In terms of domain architecture, GMPS ATP-PPase spans 211-419 (WSMESFIPKE…LNIPEHLVGR (209 aa)). 239–245 (SGGVDST) lines the ATP pocket. The XMP site is built by Arg-312, Asp-481, Lys-536, and Glu-542.

Homodimer. Also forms a small population of homotetramers. Mg(2+) is required as a cofactor.

It localises to the cytoplasm. The protein resides in the cytosol. The catalysed reaction is XMP + L-glutamine + ATP + H2O = GMP + L-glutamate + AMP + diphosphate + 2 H(+). It participates in purine metabolism; GMP biosynthesis; GMP from XMP (L-Gln route): step 1/1. Its activity is regulated as follows. The enzyme is inhibited by ECC1385; although this compound fails to inhibit growth of the organism. Functionally, catalyzes the conversion of xanthine monophosphate (XMP) to GMP in the presence of glutamine and ATP through an adenyl-XMP intermediate. This chain is GMP synthase [glutamine-hydrolyzing], found in Cryptococcus neoformans var. grubii serotype A (strain H99 / ATCC 208821 / CBS 10515 / FGSC 9487) (Filobasidiella neoformans var. grubii).